The sequence spans 269 residues: Shikimate dehydrogenase (NADP(+)) (269 aa).

Shikimate contacts are provided by residues 17–19 and Thr64; that span reads SKS. The active-site Proton acceptor is the Lys68. Glu80 lines the NADP(+) pocket. The shikimate site is built by Asn89 and Asp105. Residues 130–134, 154–159, and Met213 each bind NADP(+); these read GAGGA and NRTRAK. Residue Tyr215 participates in shikimate binding. Position 237 (Gly237) interacts with NADP(+).

Belongs to the shikimate dehydrogenase family. Homodimer.

It carries out the reaction shikimate + NADP(+) = 3-dehydroshikimate + NADPH + H(+). It functions in the pathway metabolic intermediate biosynthesis; chorismate biosynthesis; chorismate from D-erythrose 4-phosphate and phosphoenolpyruvate: step 4/7. Its function is as follows. Involved in the biosynthesis of the chorismate, which leads to the biosynthesis of aromatic amino acids. Catalyzes the reversible NADPH linked reduction of 3-dehydroshikimate (DHSA) to yield shikimate (SA). This is Shikimate dehydrogenase (NADP(+)) from Neisseria meningitidis serogroup C / serotype 2a (strain ATCC 700532 / DSM 15464 / FAM18).